We begin with the raw amino-acid sequence, 74 residues long: Small ribosomal subunit protein bS18 (74 aa).

Belongs to the bacterial ribosomal protein bS18 family. Part of the 30S ribosomal subunit. Forms a tight heterodimer with protein bS6.

In terms of biological role, binds as a heterodimer with protein bS6 to the central domain of the 16S rRNA, where it helps stabilize the platform of the 30S subunit. The protein is Small ribosomal subunit protein bS18 of Sphingopyxis alaskensis (strain DSM 13593 / LMG 18877 / RB2256) (Sphingomonas alaskensis).